The sequence spans 185 residues: Histone H1-delta (185 aa).

Disordered regions lie at residues 1–37 (MADTDAAPAAPAPSTPKKAAKKKASKPKTPASHPKYS) and 90–185 (RHVK…GKKK). The region spanning 32 to 105 (SHPKYSDMIA…GASGSFLLAE (74 aa)) is the H15 domain. Residues 109-185 (TPKKAAAKKA…KAAKGKGKKK (77 aa)) are compositionally biased toward basic residues.

This sequence belongs to the histone H1/H5 family.

The protein resides in the nucleus. The protein localises to the chromosome. Histones H1 are necessary for the condensation of nucleosome chains into higher-order structures. This Strongylocentrotus purpuratus (Purple sea urchin) protein is Histone H1-delta.